We begin with the raw amino-acid sequence, 91 residues long: Secretoglobin family 3A member 2 (91 aa).

A signal peptide spans 1–21; it reads MKLVSIFLLVTIGICGYSATA.

Belongs to the secretoglobin family. UGRP subfamily. As to quaternary structure, homodimer; disulfide-linked. Monomer. Interacts with APOA1. In terms of tissue distribution, highly expressed in lung where it localizes to epithelial cells of the trachea, bronchus and bronchioles (at protein level). Expressed in club cells of the bronchioles. Also detected in the anterior and posterior lobes of the pituitary gland where it may localize to gonadotropic cells (at protein level). Not detected in other tissues tested.

It localises to the secreted. Secreted cytokine-like protein. Binds to the scavenger receptor MARCO. Can also bind to pathogens including the Gram-positive bacterium L.monocytogenes, the Gram-negative bacterium P.aeruginosa, and yeast. Strongly inhibits phospholipase A2 (PLA2G1B) activity. Seems to have anti-inflammatory effects in respiratory epithelium. Also has anti-fibrotic activity in lung. May play a role in fetal lung development and maturation. Promotes branching morphogenesis during early stages of lung development. In the pituitary, may inhibit production of follicle-stimulating hormone (FSH) and luteinizing hormone (LH). The protein is Secretoglobin family 3A member 2 (Scgb3a2) of Mus musculus (Mouse).